The following is a 272-amino-acid chain: Hemin import ATP-binding protein HmuV (272 aa).

The region spanning 2–255 is the ABC transporter domain; the sequence is LNADHLHVAR…EPIARCYGFR (254 aa). Residue 34–41 participates in ATP binding; that stretch reads GRNGAGKS.

It belongs to the ABC transporter superfamily. Heme (hemin) importer (TC 3.A.1.14.5) family. In terms of assembly, the complex is composed of two ATP-binding proteins (HmuV), two transmembrane proteins (HmuU) and a solute-binding protein (HmuT).

Its subcellular location is the cell inner membrane. Part of the ABC transporter complex HmuTUV involved in hemin import. Responsible for energy coupling to the transport system. The polypeptide is Hemin import ATP-binding protein HmuV (Burkholderia pseudomallei (strain 1710b)).